The primary structure comprises 96 residues: Aspartyl/glutamyl-tRNA(Asn/Gln) amidotransferase subunit C (96 aa).

It belongs to the GatC family. As to quaternary structure, heterotrimer of A, B and C subunits.

It catalyses the reaction L-glutamyl-tRNA(Gln) + L-glutamine + ATP + H2O = L-glutaminyl-tRNA(Gln) + L-glutamate + ADP + phosphate + H(+). The enzyme catalyses L-aspartyl-tRNA(Asn) + L-glutamine + ATP + H2O = L-asparaginyl-tRNA(Asn) + L-glutamate + ADP + phosphate + 2 H(+). In terms of biological role, allows the formation of correctly charged Asn-tRNA(Asn) or Gln-tRNA(Gln) through the transamidation of misacylated Asp-tRNA(Asn) or Glu-tRNA(Gln) in organisms which lack either or both of asparaginyl-tRNA or glutaminyl-tRNA synthetases. The reaction takes place in the presence of glutamine and ATP through an activated phospho-Asp-tRNA(Asn) or phospho-Glu-tRNA(Gln). The chain is Aspartyl/glutamyl-tRNA(Asn/Gln) amidotransferase subunit C from Aliarcobacter butzleri (strain RM4018) (Arcobacter butzleri).